Consider the following 204-residue polypeptide: Large ribosomal subunit protein uL4 (204 aa).

A disordered region spans residues 49 to 76 (KTKGISDVSGTTAKPYGQKRTGRARQGS).

The protein belongs to the universal ribosomal protein uL4 family. As to quaternary structure, part of the 50S ribosomal subunit.

In terms of biological role, one of the primary rRNA binding proteins, this protein initially binds near the 5'-end of the 23S rRNA. It is important during the early stages of 50S assembly. It makes multiple contacts with different domains of the 23S rRNA in the assembled 50S subunit and ribosome. Functionally, forms part of the polypeptide exit tunnel. This Wolbachia sp. subsp. Drosophila simulans (strain wRi) protein is Large ribosomal subunit protein uL4.